Here is a 415-residue protein sequence, read N- to C-terminus: Serine/threonine transporter SstT (415 aa).

8 helical membrane-spanning segments follow: residues Ile23–Ala43, Leu47–Val67, Ile85–Phe105, Ala144–Leu164, Ala181–Val201, Leu220–Phe240, Ile293–Leu313, and Val333–Ile353.

Belongs to the dicarboxylate/amino acid:cation symporter (DAACS) (TC 2.A.23) family.

It localises to the cell inner membrane. It catalyses the reaction L-serine(in) + Na(+)(in) = L-serine(out) + Na(+)(out). The enzyme catalyses L-threonine(in) + Na(+)(in) = L-threonine(out) + Na(+)(out). Functionally, involved in the import of serine and threonine into the cell, with the concomitant import of sodium (symport system). This is Serine/threonine transporter SstT from Klebsiella pneumoniae subsp. pneumoniae (strain ATCC 700721 / MGH 78578).